We begin with the raw amino-acid sequence, 238 residues long: Aspartate/glutamate leucyltransferase (238 aa).

The protein belongs to the R-transferase family. Bpt subfamily.

It is found in the cytoplasm. The catalysed reaction is N-terminal L-glutamyl-[protein] + L-leucyl-tRNA(Leu) = N-terminal L-leucyl-L-glutamyl-[protein] + tRNA(Leu) + H(+). It catalyses the reaction N-terminal L-aspartyl-[protein] + L-leucyl-tRNA(Leu) = N-terminal L-leucyl-L-aspartyl-[protein] + tRNA(Leu) + H(+). Functionally, functions in the N-end rule pathway of protein degradation where it conjugates Leu from its aminoacyl-tRNA to the N-termini of proteins containing an N-terminal aspartate or glutamate. This is Aspartate/glutamate leucyltransferase from Nitrosococcus oceani (strain ATCC 19707 / BCRC 17464 / JCM 30415 / NCIMB 11848 / C-107).